The primary structure comprises 288 residues: Cell division protein ZipA (288 aa).

Position 1 (Met1) is a topological domain, periplasmic. The helical transmembrane segment at 2–22 threads the bilayer; sequence EIGLREWLIVIGIIVIAGILF. Residues 23-288 lie on the Cytoplasmic side of the membrane; sequence DGWRRMRGGK…ERRALTQRRG (266 aa). The tract at residues 48–138 is disordered; sequence DEEETTSAEV…DDKPAQRITE (91 aa). Basic and acidic residues-rich tracts occupy residues 64 to 77, 85 to 105, and 122 to 138; these read LDTH…EHDL, RDNK…KDEP, and ARDD…RITE.

This sequence belongs to the ZipA family. Interacts with FtsZ via their C-terminal domains.

Its subcellular location is the cell inner membrane. In terms of biological role, essential cell division protein that stabilizes the FtsZ protofilaments by cross-linking them and that serves as a cytoplasmic membrane anchor for the Z ring. Also required for the recruitment to the septal ring of downstream cell division proteins. The protein is Cell division protein ZipA of Pseudomonas syringae pv. tomato (strain ATCC BAA-871 / DC3000).